A 509-amino-acid chain; its full sequence is Cytochrome P450 monooxygenase CYP512U6 (509 aa).

Residues 12-29 form a helical membrane-spanning segment; the sequence is VFACVAVVIAIYAVRWYT. Cys-446 contributes to the heme binding site.

This sequence belongs to the cytochrome P450 family. Heme is required as a cofactor.

Its subcellular location is the membrane. It catalyses the reaction ganoderate DM + reduced [NADPH--hemoprotein reductase] + O2 = hainanate A + oxidized [NADPH--hemoprotein reductase] + H2O + H(+). The catalysed reaction is ganoderate TR + reduced [NADPH--hemoprotein reductase] + O2 = ganoderate Jc + oxidized [NADPH--hemoprotein reductase] + H2O + H(+). It functions in the pathway secondary metabolite biosynthesis; terpenoid biosynthesis. Its function is as follows. Cytochrome P450 monooxygenase that hydroxylates the ganoderic acids DM and TR at the C-23 position to produce hainanic acid A and ganoderic acid Jc, respectively. In Ganoderma lucidum (Ling zhi medicinal fungus), this protein is Cytochrome P450 monooxygenase CYP512U6.